Reading from the N-terminus, the 143-residue chain is MESTLGSDLARLVRVWRALIDHRLKPLELTQTHWVTLHNINRLPPEQSQIQLAKAIGIEQPSLVRTLDQLEEKGLITRHTCANDRRAKRIKLTEQSSPIIEQVDGVICSTRKEILGGISPDEIELLSGLIDKLERNIIQLQSK.

The HTH marR-type domain occupies 2–135 (ESTLGSDLAR…LSGLIDKLER (134 aa)). A DNA-binding region (H-T-H motif) is located at residues 49–72 (QIQLAKAIGIEQPSLVRTLDQLEE).

The protein belongs to the SlyA family. As to quaternary structure, homodimer.

In terms of biological role, transcription regulator that can specifically activate or repress expression of target genes. The sequence is that of Transcriptional regulator SlyA from Yersinia enterocolitica serotype O:8 / biotype 1B (strain NCTC 13174 / 8081).